An 802-amino-acid chain; its full sequence is Leucine--tRNA ligase (802 aa).

A 'HIGH' region motif is present at residues 41 to 52; the sequence is PYPSGQGLHVGH. Residues 580 to 584 carry the 'KMSKS' region motif; sequence KMSKS. Residue lysine 583 coordinates ATP.

It belongs to the class-I aminoacyl-tRNA synthetase family.

The protein resides in the cytoplasm. The enzyme catalyses tRNA(Leu) + L-leucine + ATP = L-leucyl-tRNA(Leu) + AMP + diphosphate. In Alkaliphilus oremlandii (strain OhILAs) (Clostridium oremlandii (strain OhILAs)), this protein is Leucine--tRNA ligase.